Consider the following 459-residue polypeptide: Glycosyl hydrolase family 109 protein (459 aa).

The tat-type signal signal peptide spans 1–31 (MHNIHRRHFLKAAGAVTAGLITANITASTHA). Residues 64-65 (ER), D86, 135-138 (WEWH), 155-156 (EV), and N184 each bind NAD(+). Residues Y213, R232, 244-247 (YPTH), and Y326 contribute to the substrate site. Y244 is a binding site for NAD(+).

The protein belongs to the Gfo/Idh/MocA family. Glycosyl hydrolase 109 subfamily. Requires NAD(+) as cofactor. Post-translationally, predicted to be exported by the Tat system. The position of the signal peptide cleavage has not been experimentally proven.

Its function is as follows. Glycosidase. This Shewanella putrefaciens (strain CN-32 / ATCC BAA-453) protein is Glycosyl hydrolase family 109 protein.